The chain runs to 364 residues: Pyrimidine monooxygenase RutA (364 aa).

FMN is bound by residues 49 to 50, Asn-115, Glu-124, 140 to 141, and Ser-190; these read IK and RY.

Belongs to the NtaA/SnaA/DszA monooxygenase family. RutA subfamily.

The enzyme catalyses uracil + FMNH2 + NADH + O2 = (Z)-3-ureidoacrylate + FMN + NAD(+) + H2O + H(+). It catalyses the reaction thymine + FMNH2 + NADH + O2 = (Z)-2-methylureidoacrylate + FMN + NAD(+) + H2O + H(+). In terms of biological role, catalyzes the pyrimidine ring opening between N-3 and C-4 by an unusual flavin hydroperoxide-catalyzed mechanism, adding oxygen atoms in the process to yield ureidoacrylate peracid, that immediately reacts with FMN forming ureidoacrylate and FMN-N(5)-oxide. The FMN-N(5)-oxide reacts spontaneously with NADH to produce FMN. Requires the flavin reductase RutF to regenerate FMN in vivo. This is Pyrimidine monooxygenase RutA from Methylorubrum extorquens (strain ATCC 14718 / DSM 1338 / JCM 2805 / NCIMB 9133 / AM1) (Methylobacterium extorquens).